The sequence spans 841 residues: 27S pre-rRNA (guanosine(2922)-2'-O)-methyltransferase (841 aa).

Positions 58, 60, 78, 94, and 119 each coordinate S-adenosyl-L-methionine. K159 acts as the Proton acceptor in catalysis. Residues 360–389 adopt a coiled-coil conformation; sequence QEKQRLNVKRERRRKNEMKQKELQRMQMNM. Residues S455 and S464 each carry the phosphoserine modification. Disordered regions lie at residues 480-534 and 565-654; these read RDAK…DDEA and NNVE…HSRD. Basic and acidic residues predominate over residues 505 to 517; sequence SLEKKEEEGKDYI. Positions 518-534 are enriched in acidic residues; that stretch reads EDNDDEGVEGDSDDDEA. S529 carries the phosphoserine modification. Residues 574-585 show a composition bias toward polar residues; the sequence is NTVNDGIMSSES. Residues 598–607 are compositionally biased toward basic and acidic residues; that stretch reads HEEMHQKQDE. Acidic residues-rich tracts occupy residues 608-621 and 629-641; these read ADSSDESSSDDSDF and ASEEFDSDYDSEE. Residues 642–654 are compositionally biased toward basic and acidic residues; sequence EKNQTKKEKHSRD.

The protein belongs to the class I-like SAM-binding methyltransferase superfamily. RNA methyltransferase RlmE family. SPB1 subfamily. As to quaternary structure, component of the nucleolar and nucleoplasmic pre-60S ribosomal particle. Interacts with the snoRNA-associated proteins NOP1 and NOP58.

The protein resides in the nucleus. The protein localises to the nucleolus. The catalysed reaction is guanosine(2922) in 27S pre-rRNA + S-adenosyl-L-methionine = 2'-O-methylguanosine(2922) in 27S pre-rRNA + S-adenosyl-L-homocysteine + H(+). In terms of biological role, required for proper assembly of pre-ribosomal particles during the biogenesis of the 60S ribosomal subunit. Specifically methylates the guanosine in position 2922 of the 25S rRNA at the stage of 27S pre-rRNA maturation. Also methylates the uridine in position 2921 in the absence of methylation of this residue guided by snoRNA snR52 at the stage of 35S pre-rRNA maturation. The chain is 27S pre-rRNA (guanosine(2922)-2'-O)-methyltransferase from Saccharomyces cerevisiae (strain ATCC 204508 / S288c) (Baker's yeast).